Consider the following 603-residue polypeptide: Polypeptide N-acetylgalactosaminyltransferase 10 (603 aa).

At methionine 1–alanine 11 the chain is on the cytoplasmic side. Residues valine 12–tyrosine 31 traverse the membrane as a helical; Signal-anchor for type II membrane protein segment. Residues arginine 32–asparagine 603 lie on the Lumenal side of the membrane. Residues glycine 38–glutamine 59 form a disordered region. Residues alanine 45–serine 55 are compositionally biased toward low complexity. 2 N-linked (GlcNAc...) asparagine glycosylation sites follow: asparagine 124 and asparagine 146. 5 disulfide bridges follow: cysteine 135–cysteine 365, cysteine 356–cysteine 432, cysteine 471–cysteine 488, cysteine 523–cysteine 538, and cysteine 563–cysteine 578. Positions leucine 144 to arginine 253 are catalytic subdomain A. The substrate site is built by histidine 154, glutamate 156, aspartate 185, and arginine 214. A Mn(2+)-binding site is contributed by aspartate 237. Serine 238 contacts substrate. Residue histidine 239 participates in Mn(2+) binding. The interval proline 311–arginine 373 is catalytic subdomain B. Tryptophan 342 contributes to the substrate binding site. Residue histidine 370 participates in Mn(2+) binding. The substrate site is built by arginine 373 and tyrosine 378. Residues arginine 373 to valine 384 are flexible loop. The 133-residue stretch at alanine 458–glutamate 590 folds into the Ricin B-type lectin domain. N-linked (GlcNAc...) asparagine glycosylation occurs at asparagine 593.

It belongs to the glycosyltransferase 2 family. GalNAc-T subfamily. The cofactor is Mn(2+). In terms of tissue distribution, widely expressed. Expressed at high level in small intestine, and at intermediate levels in stomach, pancreas, ovary, thyroid gland and spleen. Weakly expressed in other tissues.

The protein localises to the golgi apparatus membrane. It catalyses the reaction L-seryl-[protein] + UDP-N-acetyl-alpha-D-galactosamine = a 3-O-[N-acetyl-alpha-D-galactosaminyl]-L-seryl-[protein] + UDP + H(+). It carries out the reaction L-threonyl-[protein] + UDP-N-acetyl-alpha-D-galactosamine = a 3-O-[N-acetyl-alpha-D-galactosaminyl]-L-threonyl-[protein] + UDP + H(+). It participates in protein modification; protein glycosylation. Its function is as follows. Catalyzes the initial reaction in O-linked oligosaccharide biosynthesis, the transfer of an N-acetyl-D-galactosamine residue to a serine or threonine residue on the protein receptor. Has activity toward Muc5Ac and EA2 peptide substrates. This is Polypeptide N-acetylgalactosaminyltransferase 10 (GALNT10) from Homo sapiens (Human).